The following is a 711-amino-acid chain: Putative membrane protein IgaA homolog (711 aa).

A topological domain (periplasmic) is located at residue Met1. The chain crosses the membrane as a helical span at residues 2 to 22; sequence STIVIFLAALLACSLLAGWLI. At 23 to 204 the chain is on the cytoplasmic side; it reads KVRSRRRQLP…YALSRPRGLR (182 aa). The next 2 membrane-spanning stretches (helical) occupy residues 205-225 and 226-246; these read EALLIVASFLMFFFCLITPDV and FVPWLAGGALLLLGAGLWGLF. The Cytoplasmic portion of the chain corresponds to 247–339; the sequence is APPAKSSLRE…KNFPLQHWLR (93 aa). A helical transmembrane segment spans residues 340 to 360; it reads STIIAAGSLLVLFMLLFWIPL. At 361–655 the chain is on the periplasmic side; sequence DMPLKFTLSW…IPDRSGLWRY (295 aa). A helical membrane pass occupies residues 656-676; sequence LSTTLLLLTMLGSAIYNGVQA. Topologically, residues 677–711 are cytoplasmic; sequence WRRYQRHRTRMMKIQAYYESCLNPQLITPSESLIE.

Belongs to the IgaA family.

The protein localises to the cell inner membrane. The chain is Putative membrane protein IgaA homolog (yrfF) from Escherichia coli O157:H7.